We begin with the raw amino-acid sequence, 548 residues long: Telomerase Cajal body protein 1 (548 aa).

The tract at residues 1 to 142 (MKTLETQPLA…SGEPAAEDEG (142 aa)) is disordered. Low complexity predominate over residues 15–31 (PSDQDPAPAHPSPHASP). A phosphoserine mark is found at Ser-26, Ser-30, and Ser-54. Ser-64 is subject to Phosphoserine; by ATM. Residues Ser-85, Ser-90, Ser-112, and Ser-114 each carry the phosphoserine modification. 6 WD repeats span residues 167–206 (QPEN…YHEG), 222–267 (EGDT…LRAS), 272–313 (NHLD…RDCE), 323–364 (GQSG…ALLG), 365–405 (GHQG…YPLW), and 411–450 (VTTN…NDGK). Thr-489 carries the post-translational modification Phosphothreonine. Residue Ser-491 is modified to Phosphoserine. Positions 526–548 (SIPDDHQGEKGQGGTEGGVGELI) are disordered. Positions 535-548 (KGQGGTEGGVGELI) are enriched in gly residues.

The protein belongs to the TCAB1 family. Component of the telomerase holoenzyme complex composed of one molecule of TERT, one molecule of WRAP53/TCAB1, two molecules of H/ACA ribonucleoprotein complex subunits DKC1, NOP10, NHP2 and GAR1, and a telomerase RNA template component (TERC). The telomerase holoenzyme complex is associated with TEP1, SMG6/EST1A and POT1. Interacts with the chaperonin-containing T-complex (TRiC) complex; which mediates the folding of WRAP53/TCAB1. Interacts with COIL. Interacts with SMN1. Interacts with RNF8. Interacts with histone H2AX. Phosphorylated at Ser-64 by ATM in response to DNA damage, promoting its interaction with histone H2AX and localization to sites of DNA double-strand breaks. As to expression, expressed in all tissues and cell lines examined.

Its subcellular location is the nucleus. The protein localises to the cajal body. It localises to the chromosome. It is found in the telomere. RNA chaperone that plays a key role in telomere maintenance and RNA localization to Cajal bodies. Specifically recognizes and binds the Cajal body box (CAB box) present in both small Cajal body RNAs (scaRNAs) and telomerase RNA template component (TERC). Essential component of the telomerase holoenzyme complex, a ribonucleoprotein complex essential for the replication of chromosome termini that elongates telomeres in most eukaryotes. In the telomerase holoenzyme complex, required to stimulate the catalytic activity of the complex. Acts by specifically binding the CAB box of the TERC RNA and controlling the folding of the CR4/CR5 region of the TERC RNA, a critical step for telomerase activity. In addition, also controls telomerase holoenzyme complex localization to Cajal body. During S phase, required for delivery of TERC to telomeres during S phase and for telomerase activity. In addition to its role in telomere maintenance, also required for Cajal body formation, probably by mediating localization of scaRNAs to Cajal bodies. Also plays a role in DNA repair: phosphorylated by ATM in response to DNA damage and relocalizes to sites of DNA double-strand breaks to promote the repair of DNA double-strand breaks. Acts by recruiting the ubiquitin ligase RNF8 to DNA breaks and promote both homologous recombination (HR) and non-homologous end joining (NHEJ). This Homo sapiens (Human) protein is Telomerase Cajal body protein 1.